Consider the following 462-residue polypeptide: Cysteine--tRNA ligase (462 aa).

Cysteine 30 contributes to the Zn(2+) binding site. Positions 32-42 (MTVYDYCHVGH) match the 'HIGH' region motif. Zn(2+) is bound by residues cysteine 214, histidine 239, and glutamate 243. The 'KMSKS' region motif lies at 271–275 (KMSKS). Residue lysine 274 participates in ATP binding.

Belongs to the class-I aminoacyl-tRNA synthetase family. As to quaternary structure, monomer. The cofactor is Zn(2+).

It localises to the cytoplasm. The catalysed reaction is tRNA(Cys) + L-cysteine + ATP = L-cysteinyl-tRNA(Cys) + AMP + diphosphate. In Cupriavidus pinatubonensis (strain JMP 134 / LMG 1197) (Cupriavidus necator (strain JMP 134)), this protein is Cysteine--tRNA ligase.